Here is a 412-residue protein sequence, read N- to C-terminus: G-protein coupled receptor homolog UL33 (412 aa).

Topologically, residues 1 to 29 (MDTIIHNSTRNNTPPHINDTCNMTGPLFA) are virion surface. N-linked (GlcNAc...) asparagine; by host glycosylation is found at Asn7, Asn18, and Asn22. The helical transmembrane segment at 30–54 (IRTTEAVLNTFIIFVGGPLNAIVLI) threads the bilayer. Residues 55 to 70 (TQLLTNRVLGYSTPTI) lie on the Intravirion side of the membrane. A helical transmembrane segment spans residues 71–95 (YMTNLYSTNFLTLTVLPFIVLSNQW). Residues 96 to 102 (LLPAGVA) are Virion surface-facing. The chain crosses the membrane as a helical span at residues 103–129 (SCKFLSVIYYSSCTVGFATVALIAADR). Cys104 and Cys188 are oxidised to a cystine. At 130-138 (YRVLHKRTY) the chain is on the intravirion side. A helical transmembrane segment spans residues 139-160 (ARQSYRSTYMILLLTWLAGLIF). The Virion surface segment spans residues 161-203 (SVPAAVYTTVVMHHDANDTNNTNGHATCVLYFVAEEVHTVLLS). Residues Asn177 and Asn180 are each glycosylated (N-linked (GlcNAc...) asparagine; by host). The chain crosses the membrane as a helical span at residues 204–224 (WKVLLTMVWGAAPVIMMTWFY). The Intravirion segment spans residues 225 to 240 (AFFYSTVQRTSQKQRS). The chain crosses the membrane as a helical span at residues 241–267 (RTLTFVSVLLISFVALQTPYVSLMIFN). Over 268–281 (SYATTAWPMQCEHL) the chain is Virion surface. Residues 282–305 (TLRRTIGTLARVVPHLHCLINPIL) form a helical membrane-spanning segment. Topologically, residues 306-412 (YALLGHDFLQ…SQSHHNLSGV (107 aa)) are intravirion. The interval 377–412 (NFPSGTWKGGQKTASNDTSTKIPHRLSQSHHNLSGV) is disordered. Residues 388–397 (KTASNDTSTK) are compositionally biased toward polar residues.

This sequence belongs to the G-protein coupled receptor 1 family. Heterodimerizes with US28.

Its subcellular location is the virion. The protein localises to the host cell membrane. It localises to the host cytoplasm. G-protein-coupled receptor (vGPCR) that constitutively activates multiple oncogenic signaling pathways including STAT3, AP-1, phospholipase C, NF-kappa-B or cAMP-responsive element (CRE) pathways. Plays an important role in viral reactivation from latency through activation of host CREB1, facilitating its recruitment to the viral major immediate early (MIE) genes. In turn, expression of the MIE-driven genes such as UL123 are de-repressed. Also facilitates virus dissemination via the extracellular and cell-to-cell route. The chain is G-protein coupled receptor homolog UL33 (UL33) from Human cytomegalovirus (strain AD169) (HHV-5).